The following is a 502-amino-acid chain: ATP synthase subunit alpha (502 aa).

The tract at residues 115-135 (VDGLGPINTTNTRPIESPAPG) is disordered. Position 169 to 176 (169 to 176 (GDRQTGKT)) interacts with ATP.

It belongs to the ATPase alpha/beta chains family. In terms of assembly, F-type ATPases have 2 components, CF(1) - the catalytic core - and CF(0) - the membrane proton channel. CF(1) has five subunits: alpha(3), beta(3), gamma(1), delta(1), epsilon(1). CF(0) has three main subunits: a(1), b(2) and c(9-12). The alpha and beta chains form an alternating ring which encloses part of the gamma chain. CF(1) is attached to CF(0) by a central stalk formed by the gamma and epsilon chains, while a peripheral stalk is formed by the delta and b chains.

It localises to the cell membrane. The enzyme catalyses ATP + H2O + 4 H(+)(in) = ADP + phosphate + 5 H(+)(out). Produces ATP from ADP in the presence of a proton gradient across the membrane. The alpha chain is a regulatory subunit. In Bacillus anthracis (strain A0248), this protein is ATP synthase subunit alpha.